Here is a 153-residue protein sequence, read N- to C-terminus: Bacteriohemerythrin (153 aa).

Fe cation is bound by residues His21, His57, Glu61, His76, His80, His115, and Asp120.

This sequence belongs to the hemerythrin family. In terms of assembly, monomer.

In terms of biological role, oxygen-binding protein. May be involved in a storage mechanism or for delivery to oxygen-requiring enzymes. The oxygen-binding site contains two iron atoms. The sequence is that of Bacteriohemerythrin from Stenotrophomonas maltophilia (strain R551-3).